A 286-amino-acid polypeptide reads, in one-letter code: Ribonuclease Z (286 aa).

Zn(2+) contacts are provided by H61, H63, D65, H66, H153, D176, and H240. The active-site Proton acceptor is D65.

It belongs to the RNase Z family. As to quaternary structure, homodimer. Zn(2+) serves as cofactor.

The catalysed reaction is Endonucleolytic cleavage of RNA, removing extra 3' nucleotides from tRNA precursor, generating 3' termini of tRNAs. A 3'-hydroxy group is left at the tRNA terminus and a 5'-phosphoryl group is left at the trailer molecule.. Zinc phosphodiesterase, which displays some tRNA 3'-processing endonuclease activity. Probably involved in tRNA maturation, by removing a 3'-trailer from precursor tRNA. This Mycolicibacterium gilvum (strain PYR-GCK) (Mycobacterium gilvum (strain PYR-GCK)) protein is Ribonuclease Z.